A 185-amino-acid polypeptide reads, in one-letter code: Ribosome-recycling factor (185 aa).

This sequence belongs to the RRF family.

Its subcellular location is the cytoplasm. In terms of biological role, responsible for the release of ribosomes from messenger RNA at the termination of protein biosynthesis. May increase the efficiency of translation by recycling ribosomes from one round of translation to another. The sequence is that of Ribosome-recycling factor from Haemophilus influenzae (strain 86-028NP).